The following is a 140-amino-acid chain: FLYWCH family member 2 (140 aa).

2 disordered regions span residues 1-39 and 83-140; these read MPLP…PREF and THPE…GKSL. S21 is modified (phosphoserine). The span at 98–114 shows a compositional bias: basic and acidic residues; that stretch reads PEQKRSRQDPGADRTED. The segment covering 118 to 127 has biased composition (low complexity); that stretch reads AAGPPEAAGE.

This is FLYWCH family member 2 (FLYWCH2) from Pongo abelii (Sumatran orangutan).